A 96-amino-acid polypeptide reads, in one-letter code: Protein RnfH (96 aa).

Belongs to the UPF0125 (RnfH) family.

In Pectobacterium carotovorum subsp. carotovorum (strain PC1), this protein is Protein RnfH.